Here is a 318-residue protein sequence, read N- to C-terminus: Transaldolase (318 aa).

Lysine 132 (schiff-base intermediate with substrate) is an active-site residue.

This sequence belongs to the transaldolase family. Type 1 subfamily. In terms of assembly, homodimer.

Its subcellular location is the cytoplasm. The enzyme catalyses D-sedoheptulose 7-phosphate + D-glyceraldehyde 3-phosphate = D-erythrose 4-phosphate + beta-D-fructose 6-phosphate. Its pathway is carbohydrate degradation; pentose phosphate pathway; D-glyceraldehyde 3-phosphate and beta-D-fructose 6-phosphate from D-ribose 5-phosphate and D-xylulose 5-phosphate (non-oxidative stage): step 2/3. Functionally, transaldolase is important for the balance of metabolites in the pentose-phosphate pathway. This is Transaldolase from Shewanella baltica (strain OS185).